A 932-amino-acid polypeptide reads, in one-letter code: 2-oxoglutarate dehydrogenase E1 component (932 aa).

This sequence belongs to the alpha-ketoglutarate dehydrogenase family. In terms of assembly, homodimer. Part of the 2-oxoglutarate dehydrogenase (OGDH) complex composed of E1 (2-oxoglutarate dehydrogenase), E2 (dihydrolipoamide succinyltransferase) and E3 (dihydrolipoamide dehydrogenase); the complex contains multiple copies of the three enzymatic components (E1, E2 and E3). The cofactor is thiamine diphosphate.

The catalysed reaction is N(6)-[(R)-lipoyl]-L-lysyl-[protein] + 2-oxoglutarate + H(+) = N(6)-[(R)-S(8)-succinyldihydrolipoyl]-L-lysyl-[protein] + CO2. In terms of biological role, E1 component of the 2-oxoglutarate dehydrogenase (OGDH) complex which catalyzes the decarboxylation of 2-oxoglutarate, the first step in the conversion of 2-oxoglutarate to succinyl-CoA and CO(2). This chain is 2-oxoglutarate dehydrogenase E1 component, found in Staphylococcus aureus (strain bovine RF122 / ET3-1).